A 512-amino-acid polypeptide reads, in one-letter code: Glycosyltransferase sdnJ (512 aa).

Positions 1–24 (MHAKRPSVLFFTISDFGYVNVVLA) are cleaved as a signal peptide. Asn207 carries N-linked (GlcNAc...) asparagine glycosylation.

Belongs to the UDP-glycosyltransferase family.

The catalysed reaction is sordaricin + GDP-6-deoxy-alpha-D-altrose = 4'-O-demethylsordarin + GDP + H(+). It participates in antibiotic biosynthesis. Glycosyltransferase; part of the gene cluster that mediates the biosynthesis of sordarin and hypoxysordarin, glycoside antibiotics with a unique tetracyclic diterpene aglycone structure. First, the geranylgeranyl diphosphate synthase sdnC constructs GGDP from farnesyl diphosphate and isopentenyl diphosphate. The diterpene cyclase sdnA then catalyzes the cyclization of GGDP to afford cycloaraneosene. Cycloaraneosene is then hydroxylated four times by the putative cytochrome P450 monooxygenases sdnB, sdnE, sdnF and sdnH to give a hydroxylated cycloaraneosene derivative such as cycloaraneosene-8,9,13,19-tetraol. Although the order of the hydroxylations is unclear, at least C8, C9 and C13 of the cycloaraneosene skeleton are hydroxylated before the sordaricin formation. Dehydration of the 13-hydroxy group of the hydroxylated cycloaraneosene derivative might be catalyzed by an unassigned hypothetical protein such as sdnG and sdnP to construct the cyclopentadiene moiety. The FAD-dependent oxidoreductase sdnN is proposed to catalyze the oxidation at C9 of the hydroxylated cycloaraneosene derivative and also catalyze the Baeyer-Villiger oxidation to give the lactone intermediate. The presumed lactone intermediate would be hydrolyzed to give an acrolein moiety and a carboxylate moiety. Then, [4+2]cycloaddition would occur between the acrolein moiety and the cyclopentadiene moiety to give sordaricin. SdnN might also be involved in the [4+2]cycloaddition after the hypothesized oxidation to accommodate the oxidized product and prompt the [4+2]cycloaddition. GDP-6-deoxy-D-altrose may be biosynthesized from GDP-D-mannose by the putative GDP-mannose-4,6-dehydratase sdnI and the short-chain dehydrogenase sdnK. The glycosyltransferase sdnJ catalyzes the attachment of 6-deoxy-D-altrose onto the 19-hydroxy group of sordaricin to give 4'-O-demethylsordarin. The methyltransferase sdnD would complete the biosynthesis of sordarin. Sordarin can be further modified into hypoxysordarin. The unique acyl chain at the 3'-hydroxy group of hypoxysordarin would be constructed by an iterative type I PKS sdnO and the trans-acting polyketide methyltransferase sdnL. SdnL would be responsible for the introduction of an alpha-methyl group of the polyketide chain. Alternatively, the beta-lactamase-like protein sdnR might be responsible for the cleavage and transfer of the polyketide chain from the PKS sdnO to sordarin. Two putative cytochrome P450 monooxygenases, sdnQ and sdnT, might catalyze the epoxidations of the polyketide chain to complete the biosynthesis of hypoxysordarin. Transcriptional regulators sdnM and sdnS are presumably encoded for the transcriptional regulation of the expression of the sdn gene cluster. The protein is Glycosyltransferase sdnJ of Sordaria araneosa (Pleurage araneosa).